A 1034-amino-acid chain; its full sequence is MKEDKVLILRTCANNMADHGGIIWPLSGIVECKYWKPVKGFENGLTGLIWGKGSDSPLSLHADARWVVAEVDADECIAIETHGWIKFPRAEVLHVGTKTSAMQFILHHRADYVACTEMQAGPGAPDVTSEVKAGNRSLPVTDDIDATIESGSTQPTQTIEIATYGSTLSGTHQSQLIAGYGSTETAGDSSTLIAGYGSTGTAGSDSTLVAGYGSTQTAGEESSQMAGYGSTQTGMKGSDLTAGYGSTGTAGDDSSLIAGYGSTQTAGEDSSLTAGYGSTQTAQKGSDLTAGYGSTGTAGADSSLIAGYGSTQTAGEESTQTAGYGSTQTAQKGSDLTAGYGSTGTAGDDSSLIAGYGSTQTAGEDSSLTAGYGSTQTAQKGSDLTAGYGSTGTAGADSSLIAGYGSTQTAGEESTQTAGYGSTQTAQKGSDLTAGYGSTGTAGDDSSLIAGYGSTQTAGEDSSLTAGYGSTQTAQKGSDLTAGYGSTSTAGYESSLIAGYGSTQTAGYGSTLTAGYGSTQTAQNESDLITGYGSTSTAGANSSLIAGYGSTQTASYNSVLTAGYGSTQTAREGSDLTAGYGSTQTAQENSDLTTGYGSTSTAGYDSSLIAGYGSTQTAGYHSILTAGYGSTQTAQERSDLTTGYGSTSTAGADSSLIAGYGSTQTAGYNSILTAGYGSTQTAQENSDLTTGYGSTSTAGYESSLIAGYGSTQTASFKSTLMAGYGSSQTAREQSSLTAGYGSTSMAGYDSSLIAGYGSTQTAGYQSTLTAGYGSTQTAEHSSTLTAGYGSTATAGADSSLIAGYGSSLTSGIRSFLTAGYGSTLISGLRSVLTAGYGSSLISGRRSSLTAGYGSNQIASHRSSLIAGPESTQITGNRSMLIAGKGSSQTAGYRSTLISGADSVQMAGERGKLIAGADSTQTAGDRSKLLAGNNSYLTAGDRSKLTAGNDCILMAGDRSKLTAGINSILTAGCRSKLIGSNGSTLTAGENSVLIFRCWDGKRYTNVVAKTGKGGIEADMPYQMDEDNNIVNKPEE.

Positions 162-993 (ATYGSTLSGT…LTAGENSVLI (832 aa)) are octapeptide periodicity. Disordered regions lie at residues 260-287 (YGSTQTAGEDSSLTAGYGSTQTAQKGSD), 311-342 (TQTAGEESTQTAGYGSTQTAQKGSDLTAGYGS), 356-383 (YGSTQTAGEDSSLTAGYGSTQTAQKGSD), 407-438 (TQTAGEESTQTAGYGSTQTAQKGSDLTAGYGS), 452-480 (YGSTQTAGEDSSLTAGYGSTQTAQKGSDL), and 570-597 (AREGSDLTAGYGSTQTAQENSDLTTGYG). 6 stretches are compositionally biased toward polar residues: residues 261-286 (GSTQTAGEDSSLTAGYGSTQTAQKGS), 311-334 (TQTAGEESTQTAGYGSTQTAQKGS), 357-382 (GSTQTAGEDSSLTAGYGSTQTAQKGS), 407-430 (TQTAGEESTQTAGYGSTQTAQKGS), 453-480 (GSTQTAGEDSSLTAGYGSTQTAQKGSDL), and 580-592 (YGSTQTAQENSDL).

It belongs to the bacterial ice nucleation protein family.

Its subcellular location is the cell outer membrane. Ice nucleation proteins enable bacteria to nucleate crystallization in supercooled water. This is Ice nucleation protein InaU (inaU) from Pantoea ananas (Erwinia uredovora).